Reading from the N-terminus, the 236-residue chain is Small ribosomal subunit protein uS2c (236 aa).

This sequence belongs to the universal ribosomal protein uS2 family.

It is found in the plastid. The protein localises to the chloroplast. This is Small ribosomal subunit protein uS2c (rps2) from Piper cenocladum (Ant piper).